Here is a 265-residue protein sequence, read N- to C-terminus: WUSCHEL-related homeobox 3B (265 aa).

Positions 4–68 (TPSTRWCPTP…NHKARERQRL (65 aa)) form a DNA-binding region, homeobox; WUS-type. 2 disordered regions span residues 77-107 (QQQY…APPA) and 242-265 (PTKS…TSTN). A compositionally biased stretch (low complexity) spans 254–265 (SSKSSSCSTSTN).

The protein belongs to the WUS homeobox family. Predominantly expressed in tissues enriched for shoot meristems and young lateral organ primordia. First expressed in lateral domains of shoot meristems. It is then expressed in the margins of young lateral organ primordia. Not expressed in roots, seedling leaves or fully expanded coleoptiles. Also expressed in vegetative shoot apices (five leaf primordia and the SAM) and in the male inflorescence. Expressed at high level in the female inflorescence.

Its subcellular location is the nucleus. Its function is as follows. Probable transcription factor required to initiate organ founder cells in a lateral domain of shoot meristems. Involved in leaf formation. This chain is WUSCHEL-related homeobox 3B (WOX3B), found in Zea mays (Maize).